The chain runs to 255 residues: tRNA (guanine-N(1)-)-methyltransferase (255 aa).

Residues G119 and 139 to 144 (IGDFIL) contribute to the S-adenosyl-L-methionine site.

The protein belongs to the RNA methyltransferase TrmD family. In terms of assembly, homodimer.

It localises to the cytoplasm. The catalysed reaction is guanosine(37) in tRNA + S-adenosyl-L-methionine = N(1)-methylguanosine(37) in tRNA + S-adenosyl-L-homocysteine + H(+). Functionally, specifically methylates guanosine-37 in various tRNAs. This is tRNA (guanine-N(1)-)-methyltransferase from Pseudoalteromonas translucida (strain TAC 125).